Reading from the N-terminus, the 361-residue chain is 3-dehydroquinate synthase (361 aa).

NAD(+) contacts are provided by residues 60 to 65 (DAEAAK), 94 to 98 (GATTD), 118 to 119 (TT), Lys-131, and Lys-140. Zn(2+)-binding residues include Glu-173, His-242, and His-258.

This sequence belongs to the sugar phosphate cyclases superfamily. Dehydroquinate synthase family. Co(2+) is required as a cofactor. The cofactor is Zn(2+). Requires NAD(+) as cofactor.

Its subcellular location is the cytoplasm. The enzyme catalyses 7-phospho-2-dehydro-3-deoxy-D-arabino-heptonate = 3-dehydroquinate + phosphate. Its pathway is metabolic intermediate biosynthesis; chorismate biosynthesis; chorismate from D-erythrose 4-phosphate and phosphoenolpyruvate: step 2/7. Functionally, catalyzes the conversion of 3-deoxy-D-arabino-heptulosonate 7-phosphate (DAHP) to dehydroquinate (DHQ). This is 3-dehydroquinate synthase from Cutibacterium acnes (strain DSM 16379 / KPA171202) (Propionibacterium acnes).